Reading from the N-terminus, the 890-residue chain is Tyrosine-protein kinase receptor TYRO3 (890 aa).

Residues 1 to 40 (MALRRSMGRPGLPPLPLPPPPRLGLLLAALASLLLPESAA) form the signal peptide. 2 consecutive Ig-like C2-type domains span residues 41–128 (AGLK…TEIS) and 139–220 (PFFT…ATVH). Residues 41–429 (AGLKLMGAPV…QGPPHSRTSW (389 aa)) lie on the Extracellular side of the membrane. N-linked (GlcNAc...) asparagine glycosylation occurs at Asn63. Disulfide bonds link Cys64–Cys117 and Cys160–Cys203. N-linked (GlcNAc...) asparagine glycosylation is found at Asn191, Asn230, Asn240, Asn293, Asn366, and Asn380. Fibronectin type-III domains lie at 227–320 (APFN…TKGL) and 325–416 (APQN…SHDR). A helical transmembrane segment spans residues 430 to 450 (VPVVLGVLTALVTAAALALIL). At 451–890 (LRKRRKETRF…QQGLLPHSSC (440 aa)) the chain is on the cytoplasmic side. Ser466 carries the phosphoserine modification. In terms of domain architecture, Protein kinase spans 518 to 790 (FTLGRMLGKG…CLRMELENIL (273 aa)). ATP contacts are provided by residues 524–532 (LGKGEFGSV) and Lys550. Asp655 (proton acceptor) is an active-site residue. A phosphotyrosine; by autocatalysis mark is found at Tyr681, Tyr685, Tyr686, and Tyr804. Disordered regions lie at residues 815–837 (AGGSLELPGRDQPYSGAGDGSGM) and 851–871 (LTPGGLAEQPGQAEHQPESPL). Ser818 and Ser869 each carry phosphoserine.

Belongs to the protein kinase superfamily. Tyr protein kinase family. AXL/UFO subfamily. In terms of assembly, monomer and homodimer. Interacts (via N-terminus) with extracellular ligands TULP1 and GAS6. Interacts with PIK3R1; this interaction increases PI3-kinase activity. Post-translationally, autophosphorylated. Abundant in the brain and lower levels in other tissues.

The protein localises to the cell membrane. It catalyses the reaction L-tyrosyl-[protein] + ATP = O-phospho-L-tyrosyl-[protein] + ADP + H(+). Receptor tyrosine kinase that transduces signals from the extracellular matrix into the cytoplasm by binding to several ligands including TULP1 or GAS6. Regulates many physiological processes including cell survival, migration and differentiation. Ligand binding at the cell surface induces dimerization and autophosphorylation of TYRO3 on its intracellular domain that provides docking sites for downstream signaling molecules. Following activation by ligand, interacts with PIK3R1 and thereby enhances PI3-kinase activity. Activates the AKT survival pathway, including nuclear translocation of NF-kappa-B and up-regulation of transcription of NF-kappa-B-regulated genes. TYRO3 signaling plays a role in various processes such as neuron protection from excitotoxic injury, platelet aggregation and cytoskeleton reorganization. Also plays an important role in inhibition of Toll-like receptors (TLRs)-mediated innate immune response by activating STAT1, which selectively induces production of suppressors of cytokine signaling SOCS1 and SOCS3. Its function is as follows. (Microbial infection) Acts as a receptor for lassa virus and lymphocytic choriomeningitis virus, possibly through GAS6 binding to phosphatidyl-serine at the surface of virion envelope. In terms of biological role, (Microbial infection) Acts as a receptor for Ebolavirus, possibly through GAS6 binding to phosphatidyl-serine at the surface of virion envelope. This chain is Tyrosine-protein kinase receptor TYRO3 (TYRO3), found in Homo sapiens (Human).